Consider the following 533-residue polypeptide: NAD(P)H-quinone oxidoreductase chain 4 1 (533 aa).

14 consecutive transmembrane segments (helical) span residues 6 to 26, 37 to 57, 87 to 107, 113 to 133, 137 to 157, 169 to 189, 209 to 229, 243 to 263, 277 to 297, 311 to 331, 332 to 352, 376 to 396, 417 to 437, and 461 to 481; these read FPWL…IPLI, YSLF…WQHF, LSMP…LASW, PKLF…VFTA, MLFF…ISIW, FILY…ALAF, WLEL…LSIF, NAPG…YALI, FAPV…LNAF, ISHM…GLNG, ALLQ…LAGV, FALF…SGFV, VTIL…LSML, and LFVA…PKLT.

This sequence belongs to the complex I subunit 4 family.

Its subcellular location is the cellular thylakoid membrane. It carries out the reaction a plastoquinone + NADH + (n+1) H(+)(in) = a plastoquinol + NAD(+) + n H(+)(out). The catalysed reaction is a plastoquinone + NADPH + (n+1) H(+)(in) = a plastoquinol + NADP(+) + n H(+)(out). NDH-1 shuttles electrons from NAD(P)H, via FMN and iron-sulfur (Fe-S) centers, to quinones in the respiratory chain. The immediate electron acceptor for the enzyme in this species is believed to be plastoquinone. Couples the redox reaction to proton translocation (for every two electrons transferred, four hydrogen ions are translocated across the cytoplasmic membrane), and thus conserves the redox energy in a proton gradient. This is NAD(P)H-quinone oxidoreductase chain 4 1 from Synechococcus elongatus (strain ATCC 33912 / PCC 7942 / FACHB-805) (Anacystis nidulans R2).